Consider the following 224-residue polypeptide: Protein FMP52, mitochondrial (224 aa).

It belongs to the FMP52 family.

It is found in the mitochondrion outer membrane. The sequence is that of Protein FMP52, mitochondrial (FMP52) from Kluyveromyces lactis (strain ATCC 8585 / CBS 2359 / DSM 70799 / NBRC 1267 / NRRL Y-1140 / WM37) (Yeast).